Reading from the N-terminus, the 157-residue chain is Transcription elongation factor GreA (157 aa).

Belongs to the GreA/GreB family.

Necessary for efficient RNA polymerase transcription elongation past template-encoded arresting sites. The arresting sites in DNA have the property of trapping a certain fraction of elongating RNA polymerases that pass through, resulting in locked ternary complexes. Cleavage of the nascent transcript by cleavage factors such as GreA or GreB allows the resumption of elongation from the new 3'terminus. GreA releases sequences of 2 to 3 nucleotides. The polypeptide is Transcription elongation factor GreA (Brucella abortus (strain S19)).